The primary structure comprises 165 residues: Iron sulfur cluster assembly protein 1, mitochondrial (165 aa).

Residues 1–27 (MLPVITRFARPALMAIRPVNAMGVLRA) constitute a mitochondrion transit peptide. The segment at 132 to 136 (LPPVK) is SSQ1 binding region.

This sequence belongs to the NifU family. In terms of assembly, homodimer, but can exist as monomers or trimers. Oligomerization may be regulated by Zn(2+) availability. Component of the core Fe-S cluster (ISC) assembly machinery. Interacts with YFH1/frataxin with a 1 to 1 stoichiometry; the interaction is direct. Interacts with the mitochondrial co-chaperones JAC1 and SSQ1. Interacts with NFS1. Interacts with YAH1/ferredoxin; interacts with the reduced form. The cofactor is [2Fe-2S] cluster. Requires Zn(2+) as cofactor.

It is found in the mitochondrion matrix. It functions in the pathway cofactor biosynthesis; iron-sulfur cluster biosynthesis. In terms of biological role, scaffold protein for the de novo synthesis of iron-sulfur (Fe-S) clusters within mitochondria, which is required for maturation of both mitochondrial and cytoplasmic [2Fe-2S] and [4Fe-4S] proteins. First, a [2Fe-2S] cluster is transiently assembled on the scaffold proteins ISU1 and ISU2. In a second step, the cluster is released from ISU1/ISU2, transferred to glutaredoxin GRX5, followed by the formation of mitochondrial [2Fe-2S] proteins, the synthesis of [4Fe-4S] clusters and their target-specific insertion into the recipient apoproteins. Cluster assembly on ISU1/ISU2 depends on the function of the cysteine desulfurase complex NFS1-ISD11, which serves as the sulfur donor for cluster synthesis, the iron-binding protein frataxin (YFH1) as the putative iron donor, and the electron transfer chain comprised of ferredoxin reductase ARH1 and ferredoxin YAH1, which receive their electrons from NADH. Fe-S cluster release from ISU1/ISU2 is achieved by interaction with the Hsp70 chaperone SSQ1, assisted by the DnaJ-like co-chaperone JAC1 and the nucleotide exchange factor MGE1. ISU1 is the major isoform in yeast, while ISU2 is not detectable in cells grown to stationary phase. Also involved in production of a sulfur precursor required for thiolation of cytoplasmic tRNAs. The sequence is that of Iron sulfur cluster assembly protein 1, mitochondrial from Saccharomyces cerevisiae (strain ATCC 204508 / S288c) (Baker's yeast).